A 269-amino-acid chain; its full sequence is Formamidopyrimidine-DNA glycosylase (269 aa).

The Schiff-base intermediate with DNA role is filled by P2. E3 functions as the Proton donor in the catalytic mechanism. Residue K57 is the Proton donor; for beta-elimination activity of the active site. 3 residues coordinate DNA: H90, R109, and K150. The FPG-type zinc finger occupies 235-269 (QVYGRKGEPCRVCGTPIVATKHAQRATFYCRQCQK). R259 acts as the Proton donor; for delta-elimination activity in catalysis.

This sequence belongs to the FPG family. Monomer. Zn(2+) is required as a cofactor.

It carries out the reaction Hydrolysis of DNA containing ring-opened 7-methylguanine residues, releasing 2,6-diamino-4-hydroxy-5-(N-methyl)formamidopyrimidine.. The catalysed reaction is 2'-deoxyribonucleotide-(2'-deoxyribose 5'-phosphate)-2'-deoxyribonucleotide-DNA = a 3'-end 2'-deoxyribonucleotide-(2,3-dehydro-2,3-deoxyribose 5'-phosphate)-DNA + a 5'-end 5'-phospho-2'-deoxyribonucleoside-DNA + H(+). Functionally, involved in base excision repair of DNA damaged by oxidation or by mutagenic agents. Acts as a DNA glycosylase that recognizes and removes damaged bases. Has a preference for oxidized purines, such as 7,8-dihydro-8-oxoguanine (8-oxoG). Has AP (apurinic/apyrimidinic) lyase activity and introduces nicks in the DNA strand. Cleaves the DNA backbone by beta-delta elimination to generate a single-strand break at the site of the removed base with both 3'- and 5'-phosphates. The chain is Formamidopyrimidine-DNA glycosylase from Escherichia coli O6:K15:H31 (strain 536 / UPEC).